A 1129-amino-acid chain; its full sequence is MSSSRPANSSSNPGRANQNARVVLTTLDAKIHADFEESGNSFDYSSSVRVTSAVGENSSIQSNKLTTAYLHHIQKGKLIQPVGCLLAVDEKSFKIMAYSENAPEMLTMVSHAVPSVGEHPVLGIGTDVRTIFTAPSAAALQKAVGFTDINLLNPILVHCKTSGKPFYAIAHRVTGSLIIDFEPVKPYEVPMTAAGALQSYKLASKAVNRLQALPGGSMERLCDTMVQEVFELTGYDRVMAYKFHDDDHGEVTAEVTKPGLEPYFGLHYPATDVPQAARFLFLKNKVRMICDCRANSAPVLQDEKLPFELTLCGSTLRAPHSCHLQYMENMNSIASLVMAVVINDSDEVVESSDRNSVKSKKLWGLVVCHNTSPRFVPFPLRYACEFLAQVFAIHVSKELELENQIVEKNILRTQTLLCDLLMRDAPLGIVSQSPNMMDLVKCDGAALLYKNKVYRLGATPSDYQLRDIVSWLTEYHTDSTGLSTDSLYDAGYPGALALGDVVCGMAVVKITSHDMLFWFRSHAAGHIRWGGAKAEPDENHDGRKMHPRSSFKAFLEVVKTRSTTWKEFEMDAIHSLQLILRKALSVEKAVAAQGDEIRSNTDVIHTKLNDLKIEGIQELEAVTSEMVRLIETATVPIFAVDADEIVNGWNTKIAELTGLPVDQAMGKHLLTLVEDSSVGTVVFLLALALQGKEEQGIPFEFKTYGSREDSVPITVVVNACATRGLHDNVVGVCFVAQDVTSQKTIMDKFTRIQGDYKAIVQNPNPLIPPIFGTDEFGWCSEWNQAMTELSGWRREDVMNKMLLGEIFGIQTSCCHLKSKEAFVNLGVVLNNALTGQISEKICFSFFATDGKYVECLLCASKKLHGEGTVTGIFCFLQLASQELQQALHIQRLTEQTAMKRLKTLSYLRRQAKNPLCGINFVREKLEEIGMGEEQTKLFRTSVHCQRHVNKILDDTDLDSIIDGYLDLEMSEFRLHDVYVASRSQVSMRSNGKAIQVVDNFSEEMMSETLYGDSLRLQKVLADFMSVCVNLTPVGGHLGISVTLTEDNLGQSVQLVHLEFRITHTGAGVPEEAVSQMFGSDSETSEEGISLLISRKLVKLMNGDVHYLREAGKSTFIITVELAAASKRES.

In terms of domain architecture, GAF spans 217-399; that stretch reads SMERLCDTMV…VFAIHVSKEL (183 aa). Cysteine 322 is a phytochromobilin binding site. 2 PAS domains span residues 622–692 and 755–826; these read VTSE…LQGK and DYKA…VNLG. Positions 906-1123 constitute a Histidine kinase domain; that stretch reads YLRRQAKNPL…TFIITVELAA (218 aa).

Belongs to the phytochrome family. As to quaternary structure, homodimer. Contains one covalently linked phytochromobilin chromophore.

Regulatory photoreceptor which exists in two forms that are reversibly interconvertible by light: the Pr form that absorbs maximally in the red region of the spectrum and the Pfr form that absorbs maximally in the far-red region. Photoconversion of Pr to Pfr induces an array of morphogenic responses, whereas reconversion of Pfr to Pr cancels the induction of those responses. Pfr controls the expression of a number of nuclear genes including those encoding the small subunit of ribulose-bisphosphate carboxylase, chlorophyll A/B binding protein, protochlorophyllide reductase, rRNA, etc. It also controls the expression of its own gene(s) in a negative feedback fashion. In Petroselinum crispum (Parsley), this protein is Phytochrome A (PHYA).